A 264-amino-acid chain; its full sequence is Taurine import ATP-binding protein TauB (264 aa).

The ABC transporter domain occupies 4 to 233 (LQLERISAQY…RYAAGESARA (230 aa)). Residue 38-45 (GPSGSGKT) participates in ATP binding.

It belongs to the ABC transporter superfamily. Taurine importer (TC 3.A.1.17.1) family. As to quaternary structure, the complex is composed of two ATP-binding proteins (TauB), two transmembrane proteins (TauC) and a solute-binding protein (TauA).

It localises to the cell inner membrane. It carries out the reaction taurine(out) + ATP + H2O = taurine(in) + ADP + phosphate + H(+). Its function is as follows. Part of the ABC transporter complex TauABC involved in taurine import. Responsible for energy coupling to the transport system. The sequence is that of Taurine import ATP-binding protein TauB from Pseudomonas fluorescens (strain ATCC BAA-477 / NRRL B-23932 / Pf-5).